The sequence spans 576 residues: Coilin (576 aa).

Phosphoserine is present on Ser-105. Position 122 is a phosphothreonine (Thr-122). Disordered stretches follow at residues 125 to 330 (DCKY…CLMS) and 352 to 389 (RPGP…SLPA). Residues Lys-127, Lys-151, and Lys-160 each participate in a glycyl lysine isopeptide (Lys-Gly) (interchain with G-Cter in SUMO2) cross-link. A Phosphoserine; by VRK1 and VRK2 modification is found at Ser-184. Residues Lys-204 and Lys-209 each participate in a glycyl lysine isopeptide (Lys-Gly) (interchain with G-Cter in SUMO2) cross-link. Polar residues predominate over residues 214–225 (QRCSSPKGSARN). One copy of the 1-1 repeat lies at 223-226 (ARNS). A 2 X 4 AA repeats of A-R-N-S region spans residues 223-271 (ARNSLVKAKRKGSVSVCSKESPSSSSESESCDESISDGPSKVTLEARNS). Residues 235–250 (SVSVCSKESPSSSSES) show a composition bias toward low complexity. Phosphoserine occurs at positions 248, 250, 256, 271, and 272. One copy of the 1-2 repeat lies at 268–271 (ARNS). Basic and acidic residues predominate over residues 270 to 285 (NSSEKLPTELSKEEPS). Glycyl lysine isopeptide (Lys-Gly) (interchain with G-Cter in SUMO2) cross-links involve residues Lys-274 and Lys-281. A Phosphothreonine modification is found at Thr-290. Glycyl lysine isopeptide (Lys-Gly) (interchain with G-Cter in SUMO2) cross-links involve residues Lys-293 and Lys-297. Residue Ser-301 is modified to Phosphoserine. Low complexity predominate over residues 301-320 (SLTPSKGKTSGTTSSSSDSS). Position 303 is a phosphothreonine (Thr-303). Residues 386–389 (SLPA) form a 2-1 repeat. Positions 386–520 (SLPASLGRGW…DIEILSSLPA (135 aa)) are 2 X 4 AA repeats of S-L-P-A. The segment at 392 to 420 (GRGWGREENLFSWKGAKGRGMRGRGRGRG) is required for interaction with SMN. A Phosphoserine modification is found at Ser-403. 4 consecutive repeat copies span residues 413-414 (RG), 415-416 (RG), 417-418 (RG), and 419-420 (RG). Residues 413–420 (RGRGRGRG) form a 4 X 2 AA tandem repeats of R-G region. Lys-444 is covalently cross-linked (Glycyl lysine isopeptide (Lys-Gly) (interchain with G-Cter in SUMO2)). Thr-456 carries the phosphothreonine modification. Residues 460–559 (DYSLLPLLAA…ITVFWKELID (100 aa)) form the Tudor; atypical domain. A phosphoserine mark is found at Ser-487 and Ser-489. Lys-496 participates in a covalent cross-link: Glycyl lysine isopeptide (Lys-Gly) (interchain with G-Cter in SUMO2). A 2-2 repeat occupies 517-520 (SLPA). Ser-566 is subject to Phosphoserine.

Belongs to the coilin family. Interacts with ANKS1B. Interacts with SMN1 (via Tudor domain). Interacts (via C-terminus) with AK6. Interacts with WRAP53/TCAB1. Interacts with HMBOX1. Interacts with PSME3; the interaction is inhibited by PSME3IP1. Interacts wit UBL5. In terms of processing, symmetrical dimethylation of arginine residues within the RG repeat region enhances affinity for SMN, and thus localization of SMN complexes to CBs. Post-translationally, phosphorylated by VRK1. Phosphorylation during mitosis is associated with disassembly of CBs. In terms of tissue distribution, found in all the cell types examined.

It localises to the nucleus. It is found in the cajal body. Its function is as follows. Component of nuclear coiled bodies, also known as Cajal bodies or CBs, which are involved in the modification and assembly of nucleoplasmic snRNPs. The sequence is that of Coilin (COIL) from Homo sapiens (Human).